The following is a 307-amino-acid chain: Serine/threonine-protein phosphatase PP2A-1 catalytic subunit (307 aa).

Mn(2+)-binding residues include aspartate 54, histidine 56, aspartate 82, and asparagine 114. Histidine 115 acts as the Proton donor in catalysis. Mn(2+) contacts are provided by histidine 164 and histidine 238. Positions 286–307 (FEPAPRRGAEGEVNRRTPDYFL) are disordered. The span at 289-307 (APRRGAEGEVNRRTPDYFL) shows a compositional bias: basic and acidic residues.

Belongs to the PPP phosphatase family. PP-2A subfamily. Requires Mn(2+) as cofactor.

The enzyme catalyses O-phospho-L-seryl-[protein] + H2O = L-seryl-[protein] + phosphate. It catalyses the reaction O-phospho-L-threonyl-[protein] + H2O = L-threonyl-[protein] + phosphate. This chain is Serine/threonine-protein phosphatase PP2A-1 catalytic subunit, found in Acetabularia peniculus (Green alga).